The chain runs to 608 residues: Protein FAM151A (608 aa).

A helical membrane pass occupies residues 14–34; it reads WILAGSVTVTLVLAISLILGL. Residues 586–596 are compositionally biased toward polar residues; the sequence is VSSNRPSSRIG. Residues 586 to 608 form a disordered region; it reads VSSNRPSSRIGPSSVEGFPGESR.

Belongs to the menorin family.

Its subcellular location is the membrane. This chain is Protein FAM151A (Fam151a), found in Mus musculus (Mouse).